Reading from the N-terminus, the 504-residue chain is Pre-mRNA-processing factor 19 (504 aa).

S2 bears the N-acetylserine mark. The region spanning 2–73 is the U-box domain; sequence SLICSISNEV…KPPSATSIPA (72 aa). Residues 68 to 223 are may mediate interaction with PSMC5; sequence ATSIPAILKA…VGLHSASIPG (156 aa). N6-acetyllysine occurs at positions 122, 179, 244, and 261. The WD 1 repeat unit spans residues 219-259; that stretch reads ASIPGILALDLCPSDTNKILTGGADKNVVVFDKSTEQILAT. WD repeat units lie at residues 262-301, 304-345, 348-387, 390-429, 433-472, and 473-503; these read GHTKKVTSVVFHPSQELVFSASPDATIRIWSVPNTSCVQV, AHES…TKVT, TSGCSLTCAQFHPDGLIFGTGTMDSQIKIWDLKERTNVAN, GHSGPITSIAFSENGYYLATAADDSSVKLWDLRKLKNFKT, DNNFEVKSLIFDQSGTYLALGGTDVQIYICKQWTEILHFT, and EHSGLTTGVAFGHHAKFIASTGMDRSLKFYS.

The protein belongs to the WD repeat PRP19 family. In terms of assembly, homotetramer. Component of activated, catalytic and post-catalytic spliceosomes. Component of the Prp19 complex/PRP19C/Nineteen complex/NTC and related complexes described as PRP19-CDC5L splicing complex and PSO4 complex. A homotetramer of PRPF19, CDC5L, PLRG1 and BCAS2 constitute the core of those complexes. The interaction with CDC5L, PLRG1 and BCAS2 is direct within this core complex. At least three less stably associated proteins CTNNBL1, CWC15 and HSPA8 are found in the Prp19 complex. The Prp19 complex associates with the spliceosome during its assembly and remodeling recruiting additional proteins. Component of the XAB2 complex, a multimeric protein complex composed of XAB2, PRPF19, AQR, ZNF830, ISY1, and PPIE. Interacts with CWC22 and EIF4A3 in an RNA-independent manner. Interacts with RPA1 and RPA2; the PRP19-CDC5L complex is recruited to the sites of DNA repair where it interacts with the replication protein A complex (RPA). Interacts with SETMAR; required for SETMAR recruitment to site of DNA damage. Interacts with U2AF2; the interaction is direct and recruits the Prp19 complex to RNA polymerase II C-terminal domain (CTD) and the pre-mRNA. Interacts with PRPF3. Interacts with APEX1, DNTT and PSMB4. Interacts with KNSTRN. Interacts with PSMC5. Isoform 2 (via N-terminus) interacts with PPIA. Isoform 2 does not interact with CDC5L. Interacts with KHDC4. Interacts with USB1. Interacts with DDX41. In terms of tissue distribution, expressed in white and brown adipose tissues, brain and to a lower extent in liver, kidney, muscle, lung and spleen (at protein level).

Its subcellular location is the nucleus. The protein localises to the nucleoplasm. It is found in the cytoplasm. The protein resides in the cytoskeleton. It localises to the spindle. Its subcellular location is the lipid droplet. It carries out the reaction S-ubiquitinyl-[E2 ubiquitin-conjugating enzyme]-L-cysteine + [acceptor protein]-L-lysine = [E2 ubiquitin-conjugating enzyme]-L-cysteine + N(6)-ubiquitinyl-[acceptor protein]-L-lysine.. It functions in the pathway protein modification; protein ubiquitination. In terms of biological role, ubiquitin-protein ligase which is a core component of several complexes mainly involved in pre-mRNA splicing and DNA repair. Required for pre-mRNA splicing as component of the spliceosome. Core component of the PRP19C/Prp19 complex/NTC/Nineteen complex which is part of the spliceosome and participates in its assembly, its remodeling and is required for its activity. During assembly of the spliceosome, mediates 'Lys-63'-linked polyubiquitination of the U4 spliceosomal protein PRPF3. Ubiquitination of PRPF3 allows its recognition by the U5 component PRPF8 and stabilizes the U4/U5/U6 tri-snRNP spliceosomal complex. Recruited to RNA polymerase II C-terminal domain (CTD) and the pre-mRNA, it may also couple the transcriptional and spliceosomal machineries. The XAB2 complex, which contains PRPF19, is also involved in pre-mRNA splicing, transcription and transcription-coupled repair. Beside its role in pre-mRNA splicing PRPF19, as part of the PRP19-CDC5L complex, plays a role in the DNA damage response/DDR. It is recruited to the sites of DNA damage by the RPA complex where PRPF19 directly ubiquitinates RPA1 and RPA2. 'Lys-63'-linked polyubiquitination of the RPA complex allows the recruitment of the ATR-ATRIP complex and the activation of ATR, a master regulator of the DNA damage response. May also play a role in DNA double-strand break (DSB) repair by recruiting the repair factor SETMAR to altered DNA. As part of the PSO4 complex may also be involved in the DNA interstrand cross-links/ICLs repair process. In addition, may also mediate 'Lys-48'-linked polyubiquitination of substrates and play a role in proteasomal degradation. May play a role in the biogenesis of lipid droplets. May play a role in neural differentiation possibly through its function as part of the spliceosome. Its function is as follows. Forced expression leads to suppression of neuronal differentiation, and on the contrary to stimulation of astroglial cell differentiation in retinoic acid-primed P19 cells. The polypeptide is Pre-mRNA-processing factor 19 (Mus musculus (Mouse)).